Reading from the N-terminus, the 465-residue chain is Hydroxyacid-oxoacid transhydrogenase, mitochondrial (465 aa).

Belongs to the iron-containing alcohol dehydrogenase family. Hydroxyacid-oxoacid transhydrogenase subfamily.

It localises to the mitochondrion. It catalyses the reaction (S)-3-hydroxybutanoate + 2-oxoglutarate = (R)-2-hydroxyglutarate + acetoacetate. It carries out the reaction 4-hydroxybutanoate + 2-oxoglutarate = (R)-2-hydroxyglutarate + succinate semialdehyde. In terms of biological role, catalyzes the cofactor-independent reversible oxidation of gamma-hydroxybutyrate (GHB) to succinic semialdehyde (SSA) coupled to reduction of 2-ketoglutarate (2-KG) to D-2-hydroxyglutarate (D-2-HG). L-3-hydroxybutyrate (L-3-OHB) is also a substrate for HOT when using 2-KG as hydrogen acceptor, resulting in the formation of D-2-HG. This chain is Hydroxyacid-oxoacid transhydrogenase, mitochondrial, found in Caenorhabditis briggsae.